The sequence spans 285 residues: Malonyl-[acyl-carrier protein] O-methyltransferase (285 aa).

This sequence belongs to the methyltransferase superfamily.

It catalyses the reaction malonyl-[ACP] + S-adenosyl-L-methionine = malonyl-[ACP] methyl ester + S-adenosyl-L-homocysteine. It functions in the pathway cofactor biosynthesis; biotin biosynthesis. In terms of biological role, converts the free carboxyl group of a malonyl-thioester to its methyl ester by transfer of a methyl group from S-adenosyl-L-methionine (SAM). It allows to synthesize pimeloyl-ACP via the fatty acid synthetic pathway. The polypeptide is Malonyl-[acyl-carrier protein] O-methyltransferase (Bacillus cytotoxicus (strain DSM 22905 / CIP 110041 / 391-98 / NVH 391-98)).